The primary structure comprises 73 residues: Conotoxin CnIIIE (73 aa).

Residues 1-19 form the signal peptide; that stretch reads MSKLGVLLTICLLLFPLTA. The propeptide occupies 20–49; the sequence is LPMDGDQSVDRPAERMQDDISSEQYPLFNQ. 3 disulfide bridges follow: cysteine 53/cysteine 72, cysteine 54/cysteine 70, and cysteine 60/cysteine 73.

Belongs to the conotoxin M superfamily. Expressed by the venom duct.

Its subcellular location is the secreted. In terms of biological role, shows a paralytic effect in fish. The protein is Conotoxin CnIIIE of Conus consors (Singed cone).